The sequence spans 211 residues: MIGIIDYGMGNLYSVSKALERLGCPYVLSGDKEELEQARGLILPGVGSFRDAMHILNETGLAAFIRSAVENGTPLLGICLGMQLLFDESEENGPTKGLGLLRGRVVRFPGVTKTGEPYKVPHMGWNRLRFHRPSPLLRGVEEGHVYFVHSYYVIPGDEDVVLASSEYDVDVPAVVGRGCVFGTQFHPEKSGAVGMSILNNYVGIATGRGNG.

Residues 1-211 enclose the Glutamine amidotransferase type-1 domain; it reads MIGIIDYGMG…VGIATGRGNG (211 aa). Cys79 functions as the Nucleophile in the catalytic mechanism. Catalysis depends on residues His186 and Glu188.

In terms of assembly, heterodimer of HisH and HisF.

Its subcellular location is the cytoplasm. It carries out the reaction 5-[(5-phospho-1-deoxy-D-ribulos-1-ylimino)methylamino]-1-(5-phospho-beta-D-ribosyl)imidazole-4-carboxamide + L-glutamine = D-erythro-1-(imidazol-4-yl)glycerol 3-phosphate + 5-amino-1-(5-phospho-beta-D-ribosyl)imidazole-4-carboxamide + L-glutamate + H(+). The enzyme catalyses L-glutamine + H2O = L-glutamate + NH4(+). The protein operates within amino-acid biosynthesis; L-histidine biosynthesis; L-histidine from 5-phospho-alpha-D-ribose 1-diphosphate: step 5/9. Functionally, IGPS catalyzes the conversion of PRFAR and glutamine to IGP, AICAR and glutamate. The HisH subunit catalyzes the hydrolysis of glutamine to glutamate and ammonia as part of the synthesis of IGP and AICAR. The resulting ammonia molecule is channeled to the active site of HisF. The polypeptide is Imidazole glycerol phosphate synthase subunit HisH (Geobacillus kaustophilus (strain HTA426)).